The sequence spans 248 residues: Ubiquinone/menaquinone biosynthesis C-methyltransferase UbiE (248 aa).

S-adenosyl-L-methionine is bound by residues Thr71, Asp92, and Asp120–Ala121.

It belongs to the class I-like SAM-binding methyltransferase superfamily. MenG/UbiE family.

The enzyme catalyses a 2-demethylmenaquinol + S-adenosyl-L-methionine = a menaquinol + S-adenosyl-L-homocysteine + H(+). The catalysed reaction is a 2-methoxy-6-(all-trans-polyprenyl)benzene-1,4-diol + S-adenosyl-L-methionine = a 5-methoxy-2-methyl-3-(all-trans-polyprenyl)benzene-1,4-diol + S-adenosyl-L-homocysteine + H(+). Its pathway is quinol/quinone metabolism; menaquinone biosynthesis; menaquinol from 1,4-dihydroxy-2-naphthoate: step 2/2. It participates in cofactor biosynthesis; ubiquinone biosynthesis. Methyltransferase required for the conversion of demethylmenaquinol (DMKH2) to menaquinol (MKH2) and the conversion of 2-polyprenyl-6-methoxy-1,4-benzoquinol (DDMQH2) to 2-polyprenyl-3-methyl-6-methoxy-1,4-benzoquinol (DMQH2). The chain is Ubiquinone/menaquinone biosynthesis C-methyltransferase UbiE from Methylococcus capsulatus (strain ATCC 33009 / NCIMB 11132 / Bath).